Here is a 53-residue protein sequence, read N- to C-terminus: UPF0391 membrane protein KPK_4780 (53 aa).

Helical transmembrane passes span Trp4–Ala24 and Ala30–Phe47.

The protein belongs to the UPF0391 family.

It localises to the cell membrane. The protein is UPF0391 membrane protein KPK_4780 of Klebsiella pneumoniae (strain 342).